The sequence spans 115 residues: Large ribosomal subunit protein bL19 (115 aa).

It belongs to the bacterial ribosomal protein bL19 family.

Functionally, this protein is located at the 30S-50S ribosomal subunit interface and may play a role in the structure and function of the aminoacyl-tRNA binding site. The protein is Large ribosomal subunit protein bL19 of Buchnera aphidicola subsp. Acyrthosiphon pisum (strain 5A).